The sequence spans 248 residues: MNLLLLLLTVSLAPTTEAAEIIGGHEADPHSRPYMAYLQYKNEDSRDTICGGFLIREDFVLTAAHCSGSKINVTLGAHNIKEQEKTQQVIPVVKIIPHPAYNAKTISNDIMLLKLKSKAKRTRAVKTLSLPRSNFKVKPGDVCYVAGWGKLGPMGKFPDKLQEVELTVQEDQECETYLKNAYDKANQICAGDPKIKCASFQGDSGGPLVCKKVAAGIVSYGRKDGSTPRAFTKVSTFLSWIEETMKKS.

The signal sequence occupies residues M1–A18. The propeptide at A19 to E20 is activation peptide. The 226-residue stretch at I21–K246 folds into the Peptidase S1 domain. A disulfide bridge connects residues C50 and C66. The active-site Charge relay system is the H65. A glycan (N-linked (GlcNAc...) asparagine) is linked at N72. D109 serves as the catalytic Charge relay system. Intrachain disulfides connect C143-C210 and C174-C189. Catalysis depends on S204, which acts as the Charge relay system.

This sequence belongs to the peptidase S1 family. Granzyme subfamily. Duodenum.

Its function is as follows. This enzyme is necessary for target cell lysis in cell-mediated immune responses. This chain is Granzyme-like protein 1, found in Rattus norvegicus (Rat).